The sequence spans 406 residues: 1-deoxy-D-xylulose 5-phosphate reductoisomerase (406 aa).

NADPH is bound by residues threonine 21, glycine 22, serine 23, isoleucine 24, glycine 47, glutamine 50, and asparagine 127. A 1-deoxy-D-xylulose 5-phosphate-binding site is contributed by lysine 128. Glutamate 129 is an NADPH binding site. Residue aspartate 151 participates in Mn(2+) binding. Residues serine 152, glutamate 153, serine 177, and histidine 200 each contribute to the 1-deoxy-D-xylulose 5-phosphate site. Glutamate 153 serves as a coordination point for Mn(2+). Position 206 (glycine 206) interacts with NADPH. Positions 213, 218, 219, and 222 each coordinate 1-deoxy-D-xylulose 5-phosphate. Mn(2+) is bound at residue glutamate 222.

The protein belongs to the DXR family. The cofactor is Mg(2+). Mn(2+) serves as cofactor.

It carries out the reaction 2-C-methyl-D-erythritol 4-phosphate + NADP(+) = 1-deoxy-D-xylulose 5-phosphate + NADPH + H(+). Its pathway is isoprenoid biosynthesis; isopentenyl diphosphate biosynthesis via DXP pathway; isopentenyl diphosphate from 1-deoxy-D-xylulose 5-phosphate: step 1/6. Its function is as follows. Catalyzes the NADPH-dependent rearrangement and reduction of 1-deoxy-D-xylulose-5-phosphate (DXP) to 2-C-methyl-D-erythritol 4-phosphate (MEP). This chain is 1-deoxy-D-xylulose 5-phosphate reductoisomerase, found in Mycobacterium leprae (strain Br4923).